Here is a 570-residue protein sequence, read N- to C-terminus: Molecular chaperone MKKS (570 aa).

An ATP-binding site is contributed by 192-199 (ERMVLGKS). The interval 198-370 (KSIIVPLKGQ…FHLLPNEATV (173 aa)) is substrate-binding apical domain.

Belongs to the TCP-1 chaperonin family. As to quaternary structure, component of a complex composed at least of MKKS, BBS10, BBS12, TCP1, CCT2, CCT3, CCT4, CCT5 and CCT8. Interacts with STUB1. Interacts with BBS2 (via coiled coil domain). Interacts with CCDC28B. Interacts with BBS12. Interacts with SMARCC1, a component of the SWI/SNF complexes; the interaction takes place predominantly in the cytoplasm and may modulate SMARCC1 location. Interacts with DLEC1. Widely expressed in adult and fetal tissues. Expressed in the developing heart, brain retina, limb buds, as well as in the developing neural tube. Expressed in the embryo in the first and second branchial arches. Expressed in parafin embedded tissue sections of brain, kidney, retina, olfactory epithelium and the ependymal layer of ventricles. Detected only in restricted regions of these tissue sections, including the ciliated border of renal tubules, the connecting cilium and the inner and outer nuclear layers of retina, and the ciliated layer of olfactory epithelia.

It is found in the cytoplasm. The protein resides in the cytoskeleton. It localises to the microtubule organizing center. Its subcellular location is the centrosome. The protein localises to the cytosol. It is found in the nucleus. Functionally, probable molecular chaperone that assists the folding of proteins upon ATP hydrolysis. Plays a role in the assembly of BBSome, a complex involved in ciliogenesis regulating transports vesicles to the cilia. May play a role in protein processing in limb, cardiac and reproductive system development. May play a role in cytokinesis. This Mus musculus (Mouse) protein is Molecular chaperone MKKS (Mkks).